The chain runs to 125 residues: Large ribosomal subunit protein bL12 (125 aa).

The interval 95 to 125 is disordered; sequence APKPIKEGVDKKTAEEAKKKLEEAGAKAELK.

This sequence belongs to the bacterial ribosomal protein bL12 family. Homodimer. Part of the ribosomal stalk of the 50S ribosomal subunit. Forms a multimeric L10(L12)X complex, where L10 forms an elongated spine to which 2 to 4 L12 dimers bind in a sequential fashion. Binds GTP-bound translation factors.

Functionally, forms part of the ribosomal stalk which helps the ribosome interact with GTP-bound translation factors. Is thus essential for accurate translation. The sequence is that of Large ribosomal subunit protein bL12 from Polynucleobacter necessarius subsp. necessarius (strain STIR1).